The primary structure comprises 149 residues: D-aminoacyl-tRNA deacylase (149 aa).

The Gly-cisPro motif, important for rejection of L-amino acids motif lies at 137-138 (GP).

The protein belongs to the DTD family. Homodimer.

The protein localises to the cytoplasm. The enzyme catalyses glycyl-tRNA(Ala) + H2O = tRNA(Ala) + glycine + H(+). It carries out the reaction a D-aminoacyl-tRNA + H2O = a tRNA + a D-alpha-amino acid + H(+). Its function is as follows. An aminoacyl-tRNA editing enzyme that deacylates mischarged D-aminoacyl-tRNAs. Also deacylates mischarged glycyl-tRNA(Ala), protecting cells against glycine mischarging by AlaRS. Acts via tRNA-based rather than protein-based catalysis; rejects L-amino acids rather than detecting D-amino acids in the active site. By recycling D-aminoacyl-tRNA to D-amino acids and free tRNA molecules, this enzyme counteracts the toxicity associated with the formation of D-aminoacyl-tRNA entities in vivo and helps enforce protein L-homochirality. The polypeptide is D-aminoacyl-tRNA deacylase (Geobacter sp. (strain M21)).